Reading from the N-terminus, the 289-residue chain is ATP phosphoribosyltransferase (289 aa).

The protein belongs to the ATP phosphoribosyltransferase family. Long subfamily. The cofactor is Mg(2+).

It localises to the cytoplasm. The catalysed reaction is 1-(5-phospho-beta-D-ribosyl)-ATP + diphosphate = 5-phospho-alpha-D-ribose 1-diphosphate + ATP. The protein operates within amino-acid biosynthesis; L-histidine biosynthesis; L-histidine from 5-phospho-alpha-D-ribose 1-diphosphate: step 1/9. Its activity is regulated as follows. Feedback inhibited by histidine. Its function is as follows. Catalyzes the condensation of ATP and 5-phosphoribose 1-diphosphate to form N'-(5'-phosphoribosyl)-ATP (PR-ATP). Has a crucial role in the pathway because the rate of histidine biosynthesis seems to be controlled primarily by regulation of HisG enzymatic activity. The polypeptide is ATP phosphoribosyltransferase (Methanosarcina mazei (strain ATCC BAA-159 / DSM 3647 / Goe1 / Go1 / JCM 11833 / OCM 88) (Methanosarcina frisia)).